A 496-amino-acid polypeptide reads, in one-letter code: Glutamyl-tRNA(Gln) amidotransferase subunit A (496 aa).

Active-site charge relay system residues include Lys-75 and Ser-150. Ser-174 (acyl-ester intermediate) is an active-site residue.

Belongs to the amidase family. GatA subfamily. As to quaternary structure, heterotrimer of A, B and C subunits.

It catalyses the reaction L-glutamyl-tRNA(Gln) + L-glutamine + ATP + H2O = L-glutaminyl-tRNA(Gln) + L-glutamate + ADP + phosphate + H(+). Allows the formation of correctly charged Gln-tRNA(Gln) through the transamidation of misacylated Glu-tRNA(Gln) in organisms which lack glutaminyl-tRNA synthetase. The reaction takes place in the presence of glutamine and ATP through an activated gamma-phospho-Glu-tRNA(Gln). The protein is Glutamyl-tRNA(Gln) amidotransferase subunit A of Burkholderia ambifaria (strain ATCC BAA-244 / DSM 16087 / CCUG 44356 / LMG 19182 / AMMD) (Burkholderia cepacia (strain AMMD)).